The sequence spans 79 residues: Small ribosomal subunit protein bS16 (79 aa).

The protein belongs to the bacterial ribosomal protein bS16 family.

The chain is Small ribosomal subunit protein bS16 from Desulfovibrio desulfuricans (strain ATCC 27774 / DSM 6949 / MB).